A 110-amino-acid polypeptide reads, in one-letter code: Large ribosomal subunit protein uL22 (110 aa).

This sequence belongs to the universal ribosomal protein uL22 family. In terms of assembly, part of the 50S ribosomal subunit.

In terms of biological role, this protein binds specifically to 23S rRNA; its binding is stimulated by other ribosomal proteins, e.g. L4, L17, and L20. It is important during the early stages of 50S assembly. It makes multiple contacts with different domains of the 23S rRNA in the assembled 50S subunit and ribosome. Functionally, the globular domain of the protein is located near the polypeptide exit tunnel on the outside of the subunit, while an extended beta-hairpin is found that lines the wall of the exit tunnel in the center of the 70S ribosome. In Yersinia pseudotuberculosis serotype O:1b (strain IP 31758), this protein is Large ribosomal subunit protein uL22.